The chain runs to 541 residues: ATP synthase subunit alpha (541 aa).

169–176 (GDRQTGKT) is a binding site for ATP. The segment at 506-541 (NTLLNVEEGDTGEEENNEGHNKAEQDTEEKDTEEVV) is disordered. Composition is skewed to acidic residues over residues 512 to 521 (EEGDTGEEEN) and 531 to 541 (DTEEKDTEEVV).

It belongs to the ATPase alpha/beta chains family. As to quaternary structure, F-type ATPases have 2 components, CF(1) - the catalytic core - and CF(0) - the membrane proton channel. CF(1) has five subunits: alpha(3), beta(3), gamma(1), delta(1), epsilon(1). CF(0) has three main subunits: a(1), b(2) and c(9-12). The alpha and beta chains form an alternating ring which encloses part of the gamma chain. CF(1) is attached to CF(0) by a central stalk formed by the gamma and epsilon chains, while a peripheral stalk is formed by the delta and b chains.

It is found in the cell inner membrane. The catalysed reaction is ATP + H2O + 4 H(+)(in) = ADP + phosphate + 5 H(+)(out). Produces ATP from ADP in the presence of a proton gradient across the membrane. The alpha chain is a regulatory subunit. In Halothermothrix orenii (strain H 168 / OCM 544 / DSM 9562), this protein is ATP synthase subunit alpha.